The following is a 530-amino-acid chain: Bifunctional purine biosynthesis protein PurH (530 aa).

The 149-residue stretch at methionine 1–threonine 149 folds into the MGS-like domain.

It belongs to the PurH family.

The catalysed reaction is (6R)-10-formyltetrahydrofolate + 5-amino-1-(5-phospho-beta-D-ribosyl)imidazole-4-carboxamide = 5-formamido-1-(5-phospho-D-ribosyl)imidazole-4-carboxamide + (6S)-5,6,7,8-tetrahydrofolate. It carries out the reaction IMP + H2O = 5-formamido-1-(5-phospho-D-ribosyl)imidazole-4-carboxamide. It functions in the pathway purine metabolism; IMP biosynthesis via de novo pathway; 5-formamido-1-(5-phospho-D-ribosyl)imidazole-4-carboxamide from 5-amino-1-(5-phospho-D-ribosyl)imidazole-4-carboxamide (10-formyl THF route): step 1/1. The protein operates within purine metabolism; IMP biosynthesis via de novo pathway; IMP from 5-formamido-1-(5-phospho-D-ribosyl)imidazole-4-carboxamide: step 1/1. This chain is Bifunctional purine biosynthesis protein PurH, found in Xylella fastidiosa (strain M12).